A 128-amino-acid chain; its full sequence is Calcitonin gene-related peptide 1 (128 aa).

Residues 1–25 (MGLWKSSPFLAFSILVLCQAGGLQA) form the signal peptide. The propeptide occupies 26–80 (APFRSALEGLPDPTALSEKEGRLLLAALVKAYVQRKNELEQEQEQETEGSSITAQ). Residues 63–83 (ELEQEQEQETEGSSITAQKRS) are disordered. Residues 74–83 (GSSITAQKRS) are compositionally biased toward polar residues. A disulfide bridge links Cys84 with Cys89. Phe119 is subject to Phenylalanine amide. Residues 125–128 (DLRA) constitute a propeptide that is removed on maturation.

The protein belongs to the calcitonin family.

Its subcellular location is the secreted. CGRP1/CALCA is a peptide hormone that induces vasodilation mediated by the CALCRL-RAMP1 receptor complex. Dilates a variety of vessels including the coronary, cerebral and systemic vasculature. Its abundance in the CNS also points toward a neurotransmitter or neuromodulator role. It also elevates platelet cAMP. CGRP1 can also bind and activate CALCR-RAMP1 (AMYR1) receptor complex. The protein is Calcitonin gene-related peptide 1 (CALCA) of Canis lupus familiaris (Dog).